Reading from the N-terminus, the 218-residue chain is Large ribosomal subunit protein eL13 (218 aa).

Residues 196 to 218 form a disordered region; sequence AKRAKEAAESEDAAKGDPKKAKK. Positions 199–218 are enriched in basic and acidic residues; sequence AKEAAESEDAAKGDPKKAKK.

The protein belongs to the eukaryotic ribosomal protein eL13 family. As to quaternary structure, component of the 60S large ribosomal subunit (LSU).

It is found in the cytoplasm. Its function is as follows. Component of the ribosome, a large ribonucleoprotein complex responsible for the synthesis of proteins in the cell. The small ribosomal subunit (SSU) binds messenger RNAs (mRNAs) and translates the encoded message by selecting cognate aminoacyl-transfer RNA (tRNA) molecules. The large subunit (LSU) contains the ribosomal catalytic site termed the peptidyl transferase center (PTC), which catalyzes the formation of peptide bonds, thereby polymerizing the amino acids delivered by tRNAs into a polypeptide chain. The nascent polypeptides leave the ribosome through a tunnel in the LSU and interact with protein factors that function in enzymatic processing, targeting, and the membrane insertion of nascent chains at the exit of the ribosomal tunnel. As part of the LSU, it is probably required for its formation and the maturation of rRNAs. The chain is Large ribosomal subunit protein eL13 (RpL13) from Drosophila melanogaster (Fruit fly).